The chain runs to 284 residues: Proteasome subunit pbs-5 (284 aa).

The propeptide at 1–64 (MWGETFDDFE…AGKSMQFRKG (64 aa)) is removed in mature form. The Nucleophile role is filled by Thr65.

Belongs to the peptidase T1B family. In terms of assembly, the 26S proteasome consists of a 20S proteasome core and two 19S regulatory subunits. The 20S proteasome core is composed of 28 subunits that are arranged in four stacked rings, resulting in a barrel-shaped structure. The two end rings are each formed by seven alpha subunits, and the two central rings are each formed by seven beta subunits. The catalytic chamber with the active sites is on the inside of the barrel.

It localises to the cytoplasm. Its subcellular location is the nucleus. The enzyme catalyses Cleavage of peptide bonds with very broad specificity.. Component of the 20S core proteasome complex involved in the proteolytic degradation of most intracellular proteins. This complex plays numerous essential roles within the cell by associating with different regulatory particles. Associated with two 19S regulatory particles, forms the 26S proteasome and thus participates in the ATP-dependent degradation of ubiquitinated proteins. The 26S proteasome plays a key role in the maintenance of protein homeostasis by removing misfolded or damaged proteins that could impair cellular functions, and by removing proteins whose functions are no longer required. This Caenorhabditis elegans protein is Proteasome subunit pbs-5.